Reading from the N-terminus, the 607-residue chain is Glutamyl-tRNA(Gln) amidotransferase subunit E (607 aa).

The protein belongs to the GatB/GatE family. GatE subfamily. As to quaternary structure, heterodimer of GatD and GatE.

The catalysed reaction is L-glutamyl-tRNA(Gln) + L-glutamine + ATP + H2O = L-glutaminyl-tRNA(Gln) + L-glutamate + ADP + phosphate + H(+). Allows the formation of correctly charged Gln-tRNA(Gln) through the transamidation of misacylated Glu-tRNA(Gln) in organisms which lack glutaminyl-tRNA synthetase. The reaction takes place in the presence of glutamine and ATP through an activated gamma-phospho-Glu-tRNA(Gln). The GatDE system is specific for glutamate and does not act on aspartate. This Pyrobaculum islandicum (strain DSM 4184 / JCM 9189 / GEO3) protein is Glutamyl-tRNA(Gln) amidotransferase subunit E.